The following is a 181-amino-acid chain: Large ribosomal subunit protein eL18 (181 aa).

Belongs to the eukaryotic ribosomal protein eL18 family.

The protein resides in the cytoplasm. This chain is Large ribosomal subunit protein eL18 (rpl18), found in Dictyostelium discoideum (Social amoeba).